The sequence spans 481 residues: tRNA pseudouridine(38/39) synthase (481 aa).

Ala2 is subject to N-acetylalanine. Asp119 (nucleophile) is an active-site residue. Tyr196 contacts substrate.

This sequence belongs to the tRNA pseudouridine synthase TruA family.

The protein resides in the nucleus. The enzyme catalyses uridine(38/39) in tRNA = pseudouridine(38/39) in tRNA. Formation of pseudouridine at position 39 in the anticodon stem and loop of transfer RNAs. Also acts on position 38, but much less efficiently. The protein is tRNA pseudouridine(38/39) synthase (Pus3) of Mus musculus (Mouse).